A 1056-amino-acid chain; its full sequence is Outer capsid protein VP5 (1056 aa).

This sequence belongs to the orthoreovirus lambda-2 protein family.

The protein resides in the virion. It carries out the reaction a 5'-end diphospho-ribonucleoside in mRNA + GTP + H(+) = a 5'-end (5'-triphosphoguanosine)-ribonucleoside in mRNA + diphosphate. The catalysed reaction is a 5'-end (5'-triphosphoguanosine)-ribonucleoside in mRNA + S-adenosyl-L-methionine = a 5'-end (N(7)-methyl 5'-triphosphoguanosine)-ribonucleoside in mRNA + S-adenosyl-L-homocysteine. Functionally, outer capsid protein involved in mRNA capping. Catalyzes the last 3 enzymatic activities for formation of the 5' cap structure on the viral plus-strand transcripts, namely the RNA guanylyltransferase, RNA-7N- and RNA-2'O-methyltransferase activities. This chain is Outer capsid protein VP5 (S5), found in Aedes pseudoscutellaris reovirus (isolate France) (ApRV).